A 288-amino-acid polypeptide reads, in one-letter code: ATP synthase gamma chain (288 aa).

The protein belongs to the ATPase gamma chain family. As to quaternary structure, F-type ATPases have 2 components, CF(1) - the catalytic core - and CF(0) - the membrane proton channel. CF(1) has five subunits: alpha(3), beta(3), gamma(1), delta(1), epsilon(1). CF(0) has three main subunits: a, b and c.

It is found in the cell inner membrane. In terms of biological role, produces ATP from ADP in the presence of a proton gradient across the membrane. The gamma chain is believed to be important in regulating ATPase activity and the flow of protons through the CF(0) complex. The polypeptide is ATP synthase gamma chain (Acidithiobacillus ferrooxidans (strain ATCC 23270 / DSM 14882 / CIP 104768 / NCIMB 8455) (Ferrobacillus ferrooxidans (strain ATCC 23270))).